The chain runs to 213 residues: Glycerol-3-phosphate acyltransferase (213 aa).

The next 6 helical transmembrane spans lie at 3–23 (IIIL…GLWI), 48–68 (ILGV…GTLA), 71–91 (LPLI…LAVI), 119–139 (PFFL…FSMI), 144–164 (VVAA…GFIL), and 165–185 (TSYD…IIFR).

It belongs to the PlsY family. As to quaternary structure, probably interacts with PlsX.

The protein localises to the cell membrane. The catalysed reaction is an acyl phosphate + sn-glycerol 3-phosphate = a 1-acyl-sn-glycero-3-phosphate + phosphate. It functions in the pathway lipid metabolism; phospholipid metabolism. Catalyzes the transfer of an acyl group from acyl-phosphate (acyl-PO(4)) to glycerol-3-phosphate (G3P) to form lysophosphatidic acid (LPA). This enzyme utilizes acyl-phosphate as fatty acyl donor, but not acyl-CoA or acyl-ACP. This is Glycerol-3-phosphate acyltransferase from Lactococcus lactis subsp. cremoris (strain MG1363).